The sequence spans 233 residues: Gamma-glutamyl-hercynylcysteine sulfoxide hydrolase (233 aa).

Catalysis depends on cysteine 2, which acts as the Nucleophile. Positions 2 to 233 (CRHLGWLGAQ…TALDRAKGPR (232 aa)) constitute a Glutamine amidotransferase type-2 domain.

It carries out the reaction gamma-L-glutamyl-hercynylcysteine S-oxide + H2O = S-(hercyn-2-yl)-L-cysteine S-oxide + L-glutamate. It functions in the pathway amino-acid biosynthesis; ergothioneine biosynthesis. Functionally, catalyzes the hydrolysis of the gamma-glutamyl amide bond of hercynyl-gamma-L-glutamyl-L-cysteine sulfoxide to produce hercynylcysteine sulfoxide, a step in the biosynthesis pathway of ergothioneine. Ergothioneine is an antioxidant that protects mycobacteria from oxidative stress. The sequence is that of Gamma-glutamyl-hercynylcysteine sulfoxide hydrolase (egtC) from Mycobacterium tuberculosis (strain ATCC 25618 / H37Rv).